A 487-amino-acid chain; its full sequence is MSETLTPSAGAANNVVGRVTQVRGPVVDVQFEGDLPFILNALHVQNGDHTLVLEVAQEIGERQVRCIAMDTTDGLVRGTEVRDTGKQIMVPVGPATLGRILNVVGEPIDERGPISSELRFPIHRPAPSFEEQAAASEILVTGIKVVDLLCPYLKGGKIGLFGGAGVGKTVIIQELINNIAKAHGGVSVFAGVGERTREGNDLYFEMQDAGVIKIAEDGSTEGSKVALVYGQMNEPPGARSRVALTGLSLAEYFRDEEGQDVLFFVDNIFRFTQAGSEVSALLGRIPSAVGYQPTLATEMGALQERITSTKKGSITSVQAVYVPADDLTDPAPAATFAHLDATTVLNRSIAEMGIYPAVDPLDSTSRSLDPKIVGEEHYQVARQVQQTLQTYKGLQDIIAILGMDELSEDDKKIVGRARRIQRFLSQPFHVAEVFTGAPGKLVSLEDTIRSFKAVVAGEYDHLPEGAFYMVGDIDEAIAKAEKMKQEA.

Position 162 to 169 (162 to 169 (GGAGVGKT)) interacts with ATP.

The protein belongs to the ATPase alpha/beta chains family. F-type ATPases have 2 components, CF(1) - the catalytic core - and CF(0) - the membrane proton channel. CF(1) has five subunits: alpha(3), beta(3), gamma(1), delta(1), epsilon(1). CF(0) has three main subunits: a(1), b(2) and c(9-12). The alpha and beta chains form an alternating ring which encloses part of the gamma chain. CF(1) is attached to CF(0) by a central stalk formed by the gamma and epsilon chains, while a peripheral stalk is formed by the delta and b chains.

The protein localises to the cell inner membrane. The enzyme catalyses ATP + H2O + 4 H(+)(in) = ADP + phosphate + 5 H(+)(out). In terms of biological role, produces ATP from ADP in the presence of a proton gradient across the membrane. The catalytic sites are hosted primarily by the beta subunits. The protein is ATP synthase subunit beta 1 of Gluconobacter oxydans (strain 621H) (Gluconobacter suboxydans).